We begin with the raw amino-acid sequence, 155 residues long: Small ribosomal subunit protein uS9 (155 aa).

The protein belongs to the universal ribosomal protein uS9 family.

This is Small ribosomal subunit protein uS9 from Rhizobium etli (strain CIAT 652).